The chain runs to 349 residues: Transmembrane protein 255A (349 aa).

A run of 4 helical transmembrane segments spans residues 30–50, 57–77, 89–109, and 226–246; these read IYVT…GLAA, VTVG…LGII, LVAS…CAIV, and TILN…LGGF. The segment at 303–329 is disordered; it reads PSSPPSGLSDEPQSASPSPSYMWSSSA. Residues 316–329 are compositionally biased toward low complexity; the sequence is SASPSPSYMWSSSA.

Belongs to the TMEM255 family.

It localises to the membrane. This chain is Transmembrane protein 255A (TMEM255A), found in Homo sapiens (Human).